Consider the following 1218-residue polypeptide: Protein dispatched (1218 aa).

Residues 21–41 (YLVVVSIAVYCVACIIVALVL) traverse the membrane as a helical segment. A disordered region spans residues 99 to 135 (VETKLHPNHRRRKNKHKNRNKNKRRKEQNQSSHEHHD). Basic residues predominate over residues 104-124 (HPNHRRRKNKHKNRNKNKRRK). Asparagine 127, asparagine 176, asparagine 197, asparagine 264, asparagine 319, and asparagine 388 each carry an N-linked (GlcNAc...) asparagine glycan. The 195-residue stretch at 430-624 (AMDLGLENEL…ITWLPASVSI (195 aa)) folds into the SSD domain. 6 helical membrane-spanning segments follow: residues 443-463 (LLLTDVWLVSLGGTFVMASVW), 473-493 (LMSCVAICFSLGLAYFFYAIV), 504-524 (LLAVVVIIGIGADDVFLFLKI), 570-590 (AAASMFVTSLTTAGAFYASYS), 598-618 (CFGIFAGTVVVTNYLLMITWL), and 670-690 (AYLWLLIFGALGASSAVIVFW). N-linked (GlcNAc...) asparagine glycosylation is found at asparagine 767, asparagine 883, and asparagine 891. 5 helical membrane passes run 975 to 995 (LAVLLCFTVNILISIYAVLTV), 996 to 1016 (SLSIFNTVAVLILLGWQLNIL), 1019 to 1039 (IAVSTAIGLAVDFSLHYGIHY), 1058 to 1078 (IIGPTVMAATTTGLAGGIMMA), and 1087 to 1107 (IGVFLVVVMIVSWFYATFFLM).

Belongs to the dispatched family.

It localises to the membrane. Functionally, segment polarity protein which functions in hedgehog (Hh) signaling. Regulates the trafficking and the release of cholesterol-modified hedgehog protein from cells of the posterior compartment (P cells) and is hence required for the effective production of the Hh signal. The sequence is that of Protein dispatched (disp) from Drosophila melanogaster (Fruit fly).